Reading from the N-terminus, the 779-residue chain is Membrane metallo-endopeptidase-like 1 (779 aa).

The Cytoplasmic segment spans residues 1–27; the sequence is MGKSEGPVGMVESAGRAGQKRPGFLEG. The chain crosses the membrane as a helical; Signal-anchor for type II membrane protein span at residues 28–48; the sequence is GLLLLLLLVTAALVALGVLYA. Residues 49–779 lie on the Lumenal side of the membrane; sequence DRRGKQLPRL…MHPKERCRVW (731 aa). A Peptidase M13 domain is found at 88–779; that stretch reads VCTTPGCVIA…MHPKERCRVW (692 aa). 5 cysteine pairs are disulfide-bonded: C89-C94, C112-C764, C120-C724, C175-C439, and C650-C776. R135 is an a peptide binding site. Residues N177, N207, N350, and N530 are each glycosylated (N-linked (GlcNAc...) asparagine). A coiled-coil region spans residues 515–560; sequence LEEMNRRLDEEYSNLNFSEDLYFENSLQNLKVGAQRSLRKLREKVD. Residue H613 participates in Zn(2+) binding. E614 is a catalytic residue. A Zn(2+)-binding site is contributed by H617. The N-linked (GlcNAc...) asparagine glycan is linked to N657. E676 is a binding site for Zn(2+). D680 (proton donor) is an active-site residue.

This sequence belongs to the peptidase M13 family. Requires Zn(2+) as cofactor. N-glycosylated. In terms of tissue distribution, predominantly expressed in testis. Weakly expressed in brain, kidney and heart.

It is found in the membrane. It localises to the secreted. It carries out the reaction Preferential cleavage of polypeptides between hydrophobic residues, particularly with Phe or Tyr at P1'.. With respect to regulation, inhibited by thiorphan and phosphoramidon. Functionally, metalloprotease involved in sperm function, possibly by modulating the processes of fertilization and early embryonic development. Degrades a broad variety of small peptides with a preference for peptides shorter than 3 kDa containing neutral bulky aliphatic or aromatic amino acid residues. Shares the same substrate specificity with MME and cleaves peptides at the same amide bond. The chain is Membrane metallo-endopeptidase-like 1 (MMEL1) from Homo sapiens (Human).